The following is a 149-amino-acid chain: Large ribosomal subunit protein uL15 (149 aa).

Residues 1–53 form a disordered region; it reads MRLHTLQPAPGAKSTRKRVGRGTSSGHGKTSGFGHKGQKARSGRVGKRGFEGG. Positions 23 to 35 are enriched in gly residues; the sequence is TSSGHGKTSGFGH. Basic residues predominate over residues 36–47; it reads KGQKARSGRVGK.

The protein belongs to the universal ribosomal protein uL15 family. Part of the 50S ribosomal subunit.

In terms of biological role, binds to the 23S rRNA. The sequence is that of Large ribosomal subunit protein uL15 from Coprothermobacter proteolyticus (strain ATCC 35245 / DSM 5265 / OCM 4 / BT).